Here is a 275-residue protein sequence, read N- to C-terminus: MSQQLQSLIEQAWEDRANLSPKAAPNDVRAAVANVIDQLDQGALRVAEKKDGQWIVNQWVKKAVLLSFRLEDNAPMTAGGFTHFYDKVPSKFASYTADDFARGGFRVVPPAVARRGSFIGKNAVLMPSYVNIGAYVDEGTMVDTWATVGSCAQIGKNVHLSGGVGIGGVLEPLQANPVIIEDNCFIGARSEVVEGVIVEENSVISMGVYLGQSTKIYDRETGEVHYGRVPAGSVVVPGNLPSKDGTYSLYCAVIVKKVDAQTRAKTSLNELLRGD.

Residues Arg-106 and Asp-143 each contribute to the substrate site.

It belongs to the transferase hexapeptide repeat family. Homotrimer.

The protein resides in the cytoplasm. The catalysed reaction is (S)-2,3,4,5-tetrahydrodipicolinate + succinyl-CoA + H2O = (S)-2-succinylamino-6-oxoheptanedioate + CoA. It functions in the pathway amino-acid biosynthesis; L-lysine biosynthesis via DAP pathway; LL-2,6-diaminopimelate from (S)-tetrahydrodipicolinate (succinylase route): step 1/3. The sequence is that of 2,3,4,5-tetrahydropyridine-2,6-dicarboxylate N-succinyltransferase from Ralstonia nicotianae (strain ATCC BAA-1114 / GMI1000) (Ralstonia solanacearum).